The sequence spans 369 residues: Peptide chain release factor 2 (369 aa).

An N5-methylglutamine modification is found at glutamine 247.

It belongs to the prokaryotic/mitochondrial release factor family. In terms of processing, methylated by PrmC. Methylation increases the termination efficiency of RF2.

The protein resides in the cytoplasm. Functionally, peptide chain release factor 2 directs the termination of translation in response to the peptide chain termination codons UGA and UAA. The protein is Peptide chain release factor 2 of Phenylobacterium zucineum (strain HLK1).